Reading from the N-terminus, the 825-residue chain is Breast cancer anti-estrogen resistance protein 3 (825 aa).

N-acetylalanine is present on Ala2. Phosphoserine occurs at positions 32, 78, and 83. The disordered stretch occupies residues 40 to 106 (DAYQDVSIHG…DRHGETFTFR (67 aa)). Positions 79–94 (PRQNSPVTQDGIQESP) are enriched in polar residues. A compositionally biased stretch (basic and acidic residues) spans 95 to 106 (WQDRHGETFTFR). The 100-residue stretch at 154-253 (WYHGRIPRQV…QSGAIIFQPI (100 aa)) folds into the SH2 domain. 2 positions are modified to phosphoserine: Ser182 and Ser290. Residue Lys334 is modified to N6-methyllysine. 3 positions are modified to phosphoserine: Ser358, Ser363, and Ser375. The residue at position 442 (Arg442) is an Omega-N-methylarginine. A Phosphoserine modification is found at Ser471. The Ras-GEF domain occupies 548–818 (DPKVIAQHVL…TALSRKLEPP (271 aa)). The mediates the interaction with BCAR1/p130CAS stretch occupies residues 744 to 748 (LATAR).

In terms of assembly, part of a complex comprised of PTPRA, BCAR1, BCAR3 (via SH2 domain) and SRC; the formation of the complex is dependent on integrin mediated-tyrosine phosphorylation of PTPRA. Within the complex, interacts (via SH2 domain) with PTPRA (when phosphorylated on 'Tyr-798'). Interacts (via Ras-GEF domain) with BCAR1. Interacts (via Ras-GEF domain) with NEDD9. Interacts with PTK2/FAK1. Interacts with PTPN1. Interacts (via SH2 domain) with EGFR (when tyrosine-phosphorylated). Post-translationally, phosphorylated on tyrosine residues. In terms of tissue distribution, ubiquitously expressed. Found in several cancer cell lines, but not in nonmalignant breast tissue.

The protein resides in the cytoplasm. It localises to the cell junction. The protein localises to the focal adhesion. Its function is as follows. Acts as an adapter protein downstream of several growth factor receptors to promote cell proliferation, migration, and redistribution of actin fibers. Specifically involved in INS/insulin signaling pathway by mediating MAPK1/ERK2-MAPK3/ERK1 activation and DNA synthesis. Promotes insulin-mediated membrane ruffling. In response to vasoconstrictor peptide EDN1, involved in the activation of RAP1 downstream of PTK2B via interaction with phosphorylated BCAR1. Inhibits cell migration and invasion via regulation of TGFB-mediated matrix digestion, actin filament rearrangement, and inhibition of invadopodia activity. May inhibit TGFB-SMAD signaling, via facilitating BCAR1 and SMAD2 and/or SMAD3 interaction. Regulates EGF-induced DNA synthesis. Required for the maintenance of ocular lens morphology and structural integrity, potentially via regulation of focal adhesion complex signaling. Acts upstream of PTPRA to regulate the localization of BCAR1 and PTPRA to focal adhesions, via regulation of SRC-mediated phosphorylation of PTPRA. Positively regulates integrin-induced tyrosine phosphorylation of BCAR1. Acts as a guanine nucleotide exchange factor (GEF) for small GTPases RALA, RAP1A and RRAS. However, in a contrasting study, lacks GEF activity towards RAP1. The sequence is that of Breast cancer anti-estrogen resistance protein 3 (BCAR3) from Homo sapiens (Human).